The sequence spans 257 residues: Ras-related protein Rab-26 (257 aa).

The interval 1-53 is disordered; that stretch reads MSRKKTPKSKGGSVPAASTLPAAANGPRLAHPRTARPGPEAPPNGPPQSGRPS. GTP contacts are provided by Ser73, Gly74, Val75, Gly76, Lys77, Thr78, Cys79, Ser96, and Thr97. Residue Thr78 coordinates Mg(2+). Short sequence motifs (switch) lie at residues 87–102 and 120–137; these read GAFL…GIDF and DTAG…YYRD. Positions 97 and 120 each coordinate Mg(2+). Residues Gly123, Asn178, Lys179, Asp181, Ala209, and Lys210 each contribute to the GTP site. S-geranylgeranyl cysteine attachment occurs at residues Cys254 and Cys255.

This sequence belongs to the small GTPase superfamily. Rab family. Interacts with ADRA2B. Interacts with RIMS1. The cofactor is Mg(2+). Expressed in pancreas, kidney, brain, submandibular gland, and lung.

The protein resides in the cytoplasmic vesicle. It is found in the secretory vesicle membrane. The protein localises to the golgi apparatus membrane. It catalyses the reaction GTP + H2O = GDP + phosphate + H(+). Regulated by guanine nucleotide exchange factors (GEFs) which promote the exchange of bound GDP for free GTP. Regulated by GTPase activating proteins (GAPs) which increase the GTP hydrolysis activity. Inhibited by GDP dissociation inhibitors (GDIs). Its function is as follows. The small GTPases Rab are key regulators of intracellular membrane trafficking, from the formation of transport vesicles to their fusion with membranes. Rabs cycle between an inactive GDP-bound form and an active GTP-bound form that is able to recruit to membranes different set of downstream effectors directly responsible for vesicle formation, movement, tethering and fusion. RAB26 mediates transport of ADRA2A and ADRA2B from the Golgi to the cell membrane. Plays a role in the maturation of zymogenic granules and in pepsinogen secretion in the stomach. Plays a role in the secretion of amylase from acinar granules in the parotid gland. The polypeptide is Ras-related protein Rab-26 (Rattus norvegicus (Rat)).